A 333-amino-acid chain; its full sequence is Torsin-1A (333 aa).

The signal sequence occupies residues 1–20 (MKLGRATLALLLLVPCVVRA). An interaction with SNAPIN region spans residues 92-252 (KPKKPLTLSL…VSVFNNKNSG (161 aa)). N144 and N159 each carry an N-linked (GlcNAc...) asparagine glycan. An interaction with KLC1 region spans residues 252–333 (GFWHSSLIDR…FTKLDYYLDD (82 aa)). The tract at residues 313–333 (KVFSDKGCKTVFTKLDYYLDD) is interaction with SYNE3.

Belongs to the ClpA/ClpB family. Torsin subfamily. In terms of assembly, homohexamer. Interacts with TOR1B; the interaction may be specific of neural tissues. Interacts (ATP-bound) with TOR1AIP1 and TOR1AIP2; the interactions induce ATPase activity. Interacts with KLHL14; preferentially when ATP-free. Interacts with KLC1 (via TPR repeats); the interaction associates TOR1A with the kinesin oligomeric complex. Interacts with COPS4; the interaction associates TOR1A with the CSN complex. Interacts with SNAPIN; the interaction is direct and associates SNAPIN with the CSN complex. Interacts with STON2. Interacts (ATP-bound) with SYNE3 (via KASH domain); the interaction is required for SYNE3 nuclear envelope localization. Interacts with VIM; the interaction associates TOR1A with the cytoskeleton. Interacts with PLEC. Interacts (ATP-bound) with SLC6A3; regulates SLC6A3 transport to the plasma membrane. N-glycosylated. In terms of tissue distribution, expressed in brain (at protein level).

It is found in the endoplasmic reticulum lumen. The protein localises to the nucleus inner membrane. The protein resides in the cell projection. Its subcellular location is the growth cone. It localises to the cytoplasmic vesicle membrane. It is found in the cytoplasmic vesicle. The protein localises to the secretory vesicle. The protein resides in the synaptic vesicle. The enzyme catalyses ATP + H2O = ADP + phosphate + H(+). In terms of biological role, protein with chaperone functions important for the control of protein folding, processing, stability and localization as well as for the reduction of misfolded protein aggregates. Involved in the regulation of synaptic vesicle recycling, controls STON2 protein stability in collaboration with the COP9 signalosome complex (CSN). In the nucleus, may link the cytoskeleton with the nuclear envelope, this mechanism seems to be crucial for the control of nuclear polarity, cell movement and, specifically in neurons, nuclear envelope integrity. Participates in the cellular trafficking and may regulate the subcellular location of multipass membrane proteins such as the dopamine transporter SLC6A3, leading to the modulation of dopamine neurotransmission. In the endoplasmic reticulum, plays a role in the quality control of protein folding by increasing clearance of misfolded proteins such as SGCE variants or holding them in an intermediate state for proper refolding. May have a redundant function with TOR1B in non-neural tissues. The sequence is that of Torsin-1A (Tor1a) from Rattus norvegicus (Rat).